A 149-amino-acid chain; its full sequence is MQIILLNDVDHLGEKGEVHEVADGYGRNYLIPQGLARVATDGAIRQLRDEQQQQARKEAAKKEQVEELKDELEDMQVVFTAKVGEDNRIFGTVTTQQIAVELSNRGFNIDRRDIELDEDIRFVGAYTASIDLGYGIEATLDIQVIPESG.

This sequence belongs to the bacterial ribosomal protein bL9 family.

Binds to the 23S rRNA. This is Large ribosomal subunit protein bL9 from Salinibacter ruber (strain DSM 13855 / M31).